We begin with the raw amino-acid sequence, 555 residues long: Putative polyketide hydroxylase (555 aa).

FAD is bound by residues 16-45 (PVLVVGGSLVGLSTSVFLGRLGVRHMLVER) and 303-313 (YRAGRVFLAGD). Positions 366-395 (ATTARAAARSAEHSHPGFAPPPGTSGGPQG) are disordered.

This sequence belongs to the PheA/TfdB FAD monooxygenase family. It depends on FAD as a cofactor.

Functionally, involved in developmentally regulated synthesis of a compound biosynthetically related to polyketide antibiotics which is essential for spore color in Streptomyces halstedii. This is Putative polyketide hydroxylase (schC) from Streptomyces halstedii.